A 49-amino-acid chain; its full sequence is Large ribosomal subunit protein bL33 (49 aa).

Belongs to the bacterial ribosomal protein bL33 family.

This is Large ribosomal subunit protein bL33 from Lacticaseibacillus casei (strain BL23) (Lactobacillus casei).